Reading from the N-terminus, the 458-residue chain is Argininosuccinate lyase (458 aa).

Belongs to the lyase 1 family. Argininosuccinate lyase subfamily.

The protein resides in the cytoplasm. It carries out the reaction 2-(N(omega)-L-arginino)succinate = fumarate + L-arginine. It functions in the pathway amino-acid biosynthesis; L-arginine biosynthesis; L-arginine from L-ornithine and carbamoyl phosphate: step 3/3. The chain is Argininosuccinate lyase from Salmonella paratyphi A (strain ATCC 9150 / SARB42).